The primary structure comprises 297 residues: Aspartate carbamoyltransferase catalytic subunit (297 aa).

Residues R51 and T52 each coordinate carbamoyl phosphate. K79 is a binding site for L-aspartate. Carbamoyl phosphate-binding residues include R101, H130, and Q133. 2 residues coordinate L-aspartate: R163 and R215. 2 residues coordinate carbamoyl phosphate: G256 and P257.

Belongs to the aspartate/ornithine carbamoyltransferase superfamily. ATCase family. In terms of assembly, heterododecamer (2C3:3R2) of six catalytic PyrB chains organized as two trimers (C3), and six regulatory PyrI chains organized as three dimers (R2).

The catalysed reaction is carbamoyl phosphate + L-aspartate = N-carbamoyl-L-aspartate + phosphate + H(+). It participates in pyrimidine metabolism; UMP biosynthesis via de novo pathway; (S)-dihydroorotate from bicarbonate: step 2/3. In terms of biological role, catalyzes the condensation of carbamoyl phosphate and aspartate to form carbamoyl aspartate and inorganic phosphate, the committed step in the de novo pyrimidine nucleotide biosynthesis pathway. In Ehrlichia ruminantium (strain Gardel), this protein is Aspartate carbamoyltransferase catalytic subunit.